A 412-amino-acid chain; its full sequence is Multifunctional CCA protein (412 aa).

2 residues coordinate ATP: glycine 8 and arginine 11. 2 residues coordinate CTP: glycine 8 and arginine 11. Residues aspartate 21 and aspartate 23 each coordinate Mg(2+). ATP contacts are provided by arginine 91, arginine 137, and arginine 140. CTP-binding residues include arginine 91, arginine 137, and arginine 140. The HD domain maps to 228–329; the sequence is TGIHTLMTLS…VKLFDSIDAW (102 aa).

Belongs to the tRNA nucleotidyltransferase/poly(A) polymerase family. Bacterial CCA-adding enzyme type 1 subfamily. Monomer. Can also form homodimers and oligomers. It depends on Mg(2+) as a cofactor. Ni(2+) is required as a cofactor.

It catalyses the reaction a tRNA precursor + 2 CTP + ATP = a tRNA with a 3' CCA end + 3 diphosphate. The catalysed reaction is a tRNA with a 3' CCA end + 2 CTP + ATP = a tRNA with a 3' CCACCA end + 3 diphosphate. Catalyzes the addition and repair of the essential 3'-terminal CCA sequence in tRNAs without using a nucleic acid template. Adds these three nucleotides in the order of C, C, and A to the tRNA nucleotide-73, using CTP and ATP as substrates and producing inorganic pyrophosphate. tRNA 3'-terminal CCA addition is required both for tRNA processing and repair. Also involved in tRNA surveillance by mediating tandem CCA addition to generate a CCACCA at the 3' terminus of unstable tRNAs. While stable tRNAs receive only 3'-terminal CCA, unstable tRNAs are marked with CCACCA and rapidly degraded. In Escherichia coli O127:H6 (strain E2348/69 / EPEC), this protein is Multifunctional CCA protein.